The following is a 303-amino-acid chain: Mevalonate kinase (303 aa).

90-100 provides a ligand contact to ATP; the sequence is PAGSGLGSSAA. D141 (proton acceptor) is an active-site residue.

The protein belongs to the GHMP kinase family. Mevalonate kinase subfamily. As to quaternary structure, homodimer. Requires Mg(2+) as cofactor.

It localises to the cytoplasm. The enzyme catalyses (R)-mevalonate + ATP = (R)-5-phosphomevalonate + ADP + H(+). Its pathway is isoprenoid biosynthesis; isopentenyl diphosphate biosynthesis via mevalonate pathway; isopentenyl diphosphate from (R)-mevalonate: step 1/3. Catalyzes the phosphorylation of (R)-mevalonate (MVA) to (R)-mevalonate 5-phosphate (MVAP). Functions in the mevalonate (MVA) pathway leading to isopentenyl diphosphate (IPP), a key precursor for the biosynthesis of isoprenoid compounds such as archaeal membrane lipids. This is Mevalonate kinase from Methanothermobacter thermautotrophicus (strain ATCC 29096 / DSM 1053 / JCM 10044 / NBRC 100330 / Delta H) (Methanobacterium thermoautotrophicum).